Here is a 720-residue protein sequence, read N- to C-terminus: Polyribonucleotide nucleotidyltransferase (720 aa).

Mg(2+) contacts are provided by D487 and D493. One can recognise a KH domain in the interval 554–613 (PRITTISIPKEKIREVIGTGGKVIREICEQTGAKIDIDDDGTIKVASVDADAAQRAIDWI). In terms of domain architecture, S1 motif spans 623 to 691 (GVIYNGKVVK…DRGKVKLSMK (69 aa)). Residues 695-720 (QTTGEDISAQLEAERAASKRERHHED) form a disordered region. Residues 706–720 (EAERAASKRERHHED) show a composition bias toward basic and acidic residues.

The protein belongs to the polyribonucleotide nucleotidyltransferase family. Mg(2+) is required as a cofactor.

It is found in the cytoplasm. The enzyme catalyses RNA(n+1) + phosphate = RNA(n) + a ribonucleoside 5'-diphosphate. Its function is as follows. Involved in mRNA degradation. Catalyzes the phosphorolysis of single-stranded polyribonucleotides processively in the 3'- to 5'-direction. This Paramagnetospirillum magneticum (strain ATCC 700264 / AMB-1) (Magnetospirillum magneticum) protein is Polyribonucleotide nucleotidyltransferase.